The following is a 227-amino-acid chain: MPYPMQLGFQDATSPIMEELTYFHDHTLMIVFLISSLVLYIIILMLTTKLTHTSTMDAQEVETIWTILPAVILVLIALPSLRILYMMDEIYNPYLTIKAMGHQWYWSYEYTDYEDLTFDSYMIPTQELTPGQLRLLEVDNRVVLPMELPIRVLISSEDVIHAWTVPSLGLKADAIPGRLNQATLTSTRPGVYYGQCSEICGSNHSFMPIVLEMTTLKYFEKWSSMMQ.

Residues 1 to 14 are Mitochondrial intermembrane-facing; it reads MPYPMQLGFQDATS. A helical membrane pass occupies residues 15–45; it reads PIMEELTYFHDHTLMIVFLISSLVLYIIILM. At 46–59 the chain is on the mitochondrial matrix side; sequence LTTKLTHTSTMDAQ. A helical membrane pass occupies residues 60–87; it reads EVETIWTILPAVILVLIALPSLRILYMM. Residues 88–227 lie on the Mitochondrial intermembrane side of the membrane; sequence DEIYNPYLTI…YFEKWSSMMQ (140 aa). The Cu cation site is built by His-161, Cys-196, Glu-198, Cys-200, His-204, and Met-207. Glu-198 provides a ligand contact to Mg(2+). Tyr-218 bears the Phosphotyrosine mark.

The protein belongs to the cytochrome c oxidase subunit 2 family. In terms of assembly, component of the cytochrome c oxidase (complex IV, CIV), a multisubunit enzyme composed of 14 subunits. The complex is composed of a catalytic core of 3 subunits MT-CO1, MT-CO2 and MT-CO3, encoded in the mitochondrial DNA, and 11 supernumerary subunits COX4I, COX5A, COX5B, COX6A, COX6B, COX6C, COX7A, COX7B, COX7C, COX8 and NDUFA4, which are encoded in the nuclear genome. The complex exists as a monomer or a dimer and forms supercomplexes (SCs) in the inner mitochondrial membrane with NADH-ubiquinone oxidoreductase (complex I, CI) and ubiquinol-cytochrome c oxidoreductase (cytochrome b-c1 complex, complex III, CIII), resulting in different assemblies (supercomplex SCI(1)III(2)IV(1) and megacomplex MCI(2)III(2)IV(2)). Found in a complex with TMEM177, COA6, COX18, COX20, SCO1 and SCO2. Interacts with TMEM177 in a COX20-dependent manner. Interacts with COX20. Interacts with COX16. Cu cation is required as a cofactor.

The protein localises to the mitochondrion inner membrane. It carries out the reaction 4 Fe(II)-[cytochrome c] + O2 + 8 H(+)(in) = 4 Fe(III)-[cytochrome c] + 2 H2O + 4 H(+)(out). Component of the cytochrome c oxidase, the last enzyme in the mitochondrial electron transport chain which drives oxidative phosphorylation. The respiratory chain contains 3 multisubunit complexes succinate dehydrogenase (complex II, CII), ubiquinol-cytochrome c oxidoreductase (cytochrome b-c1 complex, complex III, CIII) and cytochrome c oxidase (complex IV, CIV), that cooperate to transfer electrons derived from NADH and succinate to molecular oxygen, creating an electrochemical gradient over the inner membrane that drives transmembrane transport and the ATP synthase. Cytochrome c oxidase is the component of the respiratory chain that catalyzes the reduction of oxygen to water. Electrons originating from reduced cytochrome c in the intermembrane space (IMS) are transferred via the dinuclear copper A center (CU(A)) of subunit 2 and heme A of subunit 1 to the active site in subunit 1, a binuclear center (BNC) formed by heme A3 and copper B (CU(B)). The BNC reduces molecular oxygen to 2 water molecules using 4 electrons from cytochrome c in the IMS and 4 protons from the mitochondrial matrix. The chain is Cytochrome c oxidase subunit 2 (MT-CO2) from Osphranter robustus (Wallaroo).